A 115-amino-acid polypeptide reads, in one-letter code: Protamine-2 (115 aa).

The segment at 1-115 (MVRCHVKSPT…RRRRRCGRQL (115 aa)) is disordered. Serine 8 carries the post-translational modification Phosphoserine. Residues 24–38 (ETEHPDQARELRPED) show a composition bias toward basic and acidic residues. Composition is skewed to basic residues over residues 44–79 (RTHR…RRRG) and 102–115 (RRMR…GRQL).

The protein belongs to the protamine P2 family. Interacts with TDRP. In terms of processing, proteolytic processing into mature chains is required for histone eviction during spermatogenesis. Transition proteins (TNP1 and TNP2) are required for processing. As to expression, testis.

The protein resides in the nucleus. Its subcellular location is the chromosome. Protamines substitute for histones in the chromatin of sperm during the haploid phase of spermatogenesis. They compact sperm DNA into a highly condensed, stable and inactive complex. In Bos taurus (Bovine), this protein is Protamine-2 (PRM2).